We begin with the raw amino-acid sequence, 766 residues long: FYVE, RhoGEF and PH domain-containing protein 4 (766 aa).

The interval Met1–Asn150 is actin filament-binding. Composition is skewed to polar residues over residues Leu47–Pro62 and His70–Gln85. Disordered stretches follow at residues Leu47–His86 and Ile143–Gly173. The DH domain maps to Lys206–Ala393. A PH 1 domain is found at Glu422–Asp521. Residues Asp559–Ser619 form an FYVE-type zinc finger. The Zn(2+) site is built by Cys565, Cys568, Cys582, Cys585, Cys590, Cys593, Cys611, and Cys614. The 98-residue stretch at Asn643–Thr740 folds into the PH 2 domain. A phosphoserine mark is found at Ser702 and Ser716. The segment at Gly746–Cys766 is disordered.

Homooligomer. In terms of tissue distribution, detected in thymus, lung, heart, skeletal muscle, small intestine, liver, kidney, spleen and testis. Expressed in all parts of the brain and in the spinal cord at embryonic, postnatal, and adult stages. Levels of expression are lower in postnatal and adult tissues than in embryonic tissues.

It localises to the cytoplasm. It is found in the cytoskeleton. The protein localises to the cell projection. Its subcellular location is the filopodium. In terms of biological role, activates CDC42, a member of the Ras-like family of Rho- and Rac proteins, by exchanging bound GDP for free GTP. Activates MAPK8. Plays a role in regulating the actin cytoskeleton and cell shape. Promotes the formation of lamellipodia. This chain is FYVE, RhoGEF and PH domain-containing protein 4 (Fgd4), found in Mus musculus (Mouse).